The primary structure comprises 168 residues: MARFLVALALFGVVAMTAASGDAPKEWSGKPWLGKFVAEVSDKSENWEAFVDALGLPDQYPRAQLKTIHSFYKQGEHYHHILSLPDKNINKDIEFTLGQEVEIKHGEHSLKIKYFEDGNKLVADVSIPAKGKSIHDVYDVQGDQLIKSYKVGDVVAKKWFKKVANPAA.

The N-terminal stretch at 1-19 (MARFLVALALFGVVAMTAA) is a signal peptide. The SAHS-c1 stretch occupies residues 26–57 (EWSGKPWLGKFVAEVSDKSENWEAFVDALGLP). The tract at residues 72–100 (YKQGEHYHHILSLPDKNINKDIEFTLGQE) is SAHS-c2. Residues 113-162 (KYFEDGNKLVADVSIPAKGKSIHDVYDVQGDQLIKSYKVGDVVAKKWFKK) are SAHS-c3.

It belongs to the Secretory-abundant heat soluble protein (SAHS) family.

The protein localises to the secreted. Its function is as follows. Secreted heat soluble protein acting as a molecular shield in water-deficient condition. Tardigrade-specific intrinsically disordered proteins (TDPs) are essential for desiccation tolerance by forming non-crystalline amorphous solids upon desiccation, and this vitrified state mirrors their protective capabilities. The protein is Secretory-abundant heat soluble protein 33020 of Hypsibius exemplaris (Freshwater tardigrade).